Consider the following 492-residue polypeptide: G2/mitotic-specific cyclin CLB2 (492 aa).

The tract at residues 1-176 is disordered; it reads MPQVTKTNNE…QPEVGERSQS (176 aa). Residues 23–33 show a composition bias toward polar residues; the sequence is QESISTIKNTT. Positions 34 to 58 are enriched in low complexity; the sequence is ISNSQHKQQTQQQISSPPQVSVTSS. The span at 59–83 shows a compositional bias: polar residues; it reads EGVSHVNTRQYLGDVSNQYITNAKP. Positions 111–135 are enriched in low complexity; sequence ASDNNNNGSTSSSSNSSNNNNNDAN. The region spanning 208–334 is the Cyclin N-terminal domain; the sequence is EIFSYYYELE…MLTILNFDLN (127 aa).

Belongs to the cyclin family. Cyclin AB subfamily.

In terms of biological role, 2/mitotic-specific cyclin essential for the control of the cell cycle at the G2/M (mitosis) transition. G2/M cyclins accumulate steadily during G2 and are abruptly destroyed at mitosis. Degradation is necessary for the cell to exit from mitosis. Plays a role in morphogenesis by negatively regulating polarized growth. Through binding to CDC28 regulates cytokinesis, partly by phosphorylation of the actomyosin ring component IQG1. Also involved in the phosphorylation of CDC6 and CDC54. The sequence is that of G2/mitotic-specific cyclin CLB2 (CLB2) from Candida albicans (strain SC5314 / ATCC MYA-2876) (Yeast).